Here is a 273-residue protein sequence, read N- to C-terminus: Protein BRANCHLESS TRICHOME (273 aa).

The span at 1 to 12 (MKDMKMQSSPET) shows a compositional bias: polar residues. The interval 1–30 (MKDMKMQSSPETMMTRIPTPDPHSTGVRED) is disordered. Residues 69 to 199 (IKVFMESELG…GERERNRMMK (131 aa)) are a coiled coil.

Interacts with STI.

Functionally, acts as a key regulator of trichome branching. Could participate with STI in the same pathway. Also plays a role in integrating endoreplication levels with cell shape. In Arabidopsis thaliana (Mouse-ear cress), this protein is Protein BRANCHLESS TRICHOME (BLT).